We begin with the raw amino-acid sequence, 115 residues long: Large ribosomal subunit protein bL20 (115 aa).

It belongs to the bacterial ribosomal protein bL20 family.

Functionally, binds directly to 23S ribosomal RNA and is necessary for the in vitro assembly process of the 50S ribosomal subunit. It is not involved in the protein synthesizing functions of that subunit. This is Large ribosomal subunit protein bL20 from Synechococcus sp. (strain CC9605).